We begin with the raw amino-acid sequence, 453 residues long: Chromosomal replication initiator protein DnaA (453 aa).

Residues 1–71 (MSEKEIWEKV…QAILFDVVGY (71 aa)) are domain I, interacts with DnaA modulators. The domain II stretch occupies residues 71–114 (YEVKPHFITTEELANYSNNETATPKEATKPSTETTEDNHVLGRE). Residues 115–331 (QFNAHNTFDT…GALTRLLAYS (217 aa)) form a domain III, AAA+ region region. ATP contacts are provided by glycine 159, glycine 161, lysine 162, and threonine 163. The domain IV, binds dsDNA stretch occupies residues 332–453 (QLLGKPITTE…ENLEKEIRNV (122 aa)).

The protein belongs to the DnaA family. As to quaternary structure, oligomerizes as a right-handed, spiral filament on DNA at oriC.

The protein localises to the cytoplasm. Its function is as follows. Plays an essential role in the initiation and regulation of chromosomal replication. ATP-DnaA binds to the origin of replication (oriC) to initiate formation of the DNA replication initiation complex once per cell cycle. Binds the DnaA box (a 9 base pair repeat at the origin) and separates the double-stranded (ds)DNA. Forms a right-handed helical filament on oriC DNA; dsDNA binds to the exterior of the filament while single-stranded (ss)DNA is stabiized in the filament's interior. The ATP-DnaA-oriC complex binds and stabilizes one strand of the AT-rich DNA unwinding element (DUE), permitting loading of DNA polymerase. After initiation quickly degrades to an ADP-DnaA complex that is not apt for DNA replication. Binds acidic phospholipids. The protein is Chromosomal replication initiator protein DnaA of Staphylococcus aureus (strain MRSA252).